Consider the following 294-residue polypeptide: uncharacterized protein (294 aa).

Positions methionine 1 to proline 32 are disordered. Lysine 39 carries the N6-acetyllysine modification. Leucine 53–alanine 77 is an NADP(+) binding site. Substrate is bound at residue serine 186. Tyrosine 199 functions as the Proton acceptor in the catalytic mechanism.

This sequence belongs to the short-chain dehydrogenases/reductases (SDR) family.

This is an uncharacterized protein from Escherichia coli (strain K12).